Reading from the N-terminus, the 123-residue chain is Small ribosomal subunit protein uS12 (123 aa).

A 3-methylthioaspartic acid modification is found at aspartate 89. Residues 104–123 are disordered; it reads TAGVKDRKQARSKYGAKRPK. Residues 113–123 show a composition bias toward basic residues; that stretch reads ARSKYGAKRPK.

The protein belongs to the universal ribosomal protein uS12 family. In terms of assembly, part of the 30S ribosomal subunit. Contacts proteins S8 and S17. May interact with IF1 in the 30S initiation complex.

Its function is as follows. With S4 and S5 plays an important role in translational accuracy. In terms of biological role, interacts with and stabilizes bases of the 16S rRNA that are involved in tRNA selection in the A site and with the mRNA backbone. Located at the interface of the 30S and 50S subunits, it traverses the body of the 30S subunit contacting proteins on the other side and probably holding the rRNA structure together. The combined cluster of proteins S8, S12 and S17 appears to hold together the shoulder and platform of the 30S subunit. The chain is Small ribosomal subunit protein uS12 from Neisseria gonorrhoeae (strain ATCC 700825 / FA 1090).